Consider the following 143-residue polypeptide: UPF0201 protein Tneu_0685 (143 aa).

It belongs to the UPF0201 family.

In Pyrobaculum neutrophilum (strain DSM 2338 / JCM 9278 / NBRC 100436 / V24Sta) (Thermoproteus neutrophilus), this protein is UPF0201 protein Tneu_0685.